A 282-amino-acid chain; its full sequence is Aldo-keto reductase ML1669 (282 aa).

Tyrosine 57 acts as the Proton donor in catalysis. NADPH is bound by residues leucine 197, valine 235, arginine 237, serine 238, alanine 239, serine 246, asparagine 247, and arginine 273.

It belongs to the aldo/keto reductase family.

This is Aldo-keto reductase ML1669 from Mycobacterium leprae (strain TN).